The sequence spans 638 residues: tRNA uridine 5-carboxymethylaminomethyl modification enzyme MnmG (638 aa).

FAD contacts are provided by residues 15–20 (GAGHAG), I127, and S182. 276–290 (GPRYCPSIEDKIVRF) contributes to the NAD(+) binding site. FAD is bound at residue Q373.

The protein belongs to the MnmG family. As to quaternary structure, homodimer. Heterotetramer of two MnmE and two MnmG subunits. FAD is required as a cofactor.

Its subcellular location is the cytoplasm. Its function is as follows. NAD-binding protein involved in the addition of a carboxymethylaminomethyl (cmnm) group at the wobble position (U34) of certain tRNAs, forming tRNA-cmnm(5)s(2)U34. The protein is tRNA uridine 5-carboxymethylaminomethyl modification enzyme MnmG of Streptococcus suis (strain 98HAH33).